The following is a 573-amino-acid chain: MSPARLPISRESCLTIPAGFSPSALLDSPVLLTNFKVEPSPTTGSLGMAAILHKSAHPDMLPSPRDKSVRNAHEDRGSRDFEFKPHLNSSSQSLAPAMSDLKKHEHSMQNQSMNPSSSSSNMVNENRPPCSRESSLTVNVSAQNQPVGMVGLTDSMPAEVGTSEPQQMNSSDNAMQEPQSENVADKSADDGYNWRKYGQKHVKGSENPRSYYKCTHPNCEVKKLLERAVDGLITEVVYKGRHNHPKPQPNRRLAGGAVPSNQGEERYDGASAADDKSSNALSNLANPVHSPGMVEPVPASVSDDDIDAGGGRPYPGDDATEEEDLESKRRKMESAGIDAALMGKPNREPRVVVQTVSEVDILDDGYRWRKYGQKVVKGNPNPRSYYKCTSTGCPVRKHVERASHDPKSVITTYEGKHNHEVPAARNATHEMSAPPMKNVVHQINSNMPSSIGGMMRACEARNYTNQYSQAAETDTVSLDLGVGISPNHSDATNQMQSSGPDQMQYQMQTMGSMYGNMRHPSSMAAPAVQGNSAARMYGSREEKGNEGFTFRATPMDHSANLCYSSAGNLVMGP.

Disordered stretches follow at residues 56–133 (AHPD…CSRE) and 157–192 (PAEV…DDGY). Positions 64 to 85 (PRDKSVRNAHEDRGSRDFEFKP) are enriched in basic and acidic residues. Residues 108-122 (MQNQSMNPSSSSSNM) are compositionally biased toward low complexity. The span at 163–182 (SEPQQMNSSDNAMQEPQSEN) shows a compositional bias: polar residues. The span at 183 to 192 (VADKSADDGY) shows a compositional bias: basic and acidic residues. The WRKY 1 DNA-binding region spans 183 to 247 (VADKSADDGY…YKGRHNHPKP (65 aa)). C214, C219, H242, and H244 together coordinate Zn(2+). The segment at 240 to 332 (GRHNHPKPQP…EDLESKRRKM (93 aa)) is disordered. Residues 263–277 (GEERYDGASAADDKS) are compositionally biased toward basic and acidic residues. Residues 357-422 (SEVDILDDGY…YEGKHNHEVP (66 aa)) constitute a DNA-binding region (WRKY 2). C388, C393, H417, and H419 together coordinate Zn(2+).

The protein belongs to the WRKY group I family. As to expression, expressed in endosperm, but not in leaves.

The protein resides in the nucleus. In terms of biological role, transcription factor involved in starch synthesis. Acts as a transcriptional activator in sugar signaling. Interacts specifically with the SURE and W-box elements, but not with the SP8a element. The chain is WRKY transcription factor SUSIBA2 from Hordeum vulgare (Barley).